Here is an 820-residue protein sequence, read N- to C-terminus: MADRAMTRVHSVRERLTDTLSAHKNELLALFSRFVKQGQGMLQPHQLLTEYEAVIPAADREKLKDGVFEDVLKAAQEAIVIPPWVALAIRPRPGVWEYVRVNVSELAVEELTVPEYLQFKEELVDGSGQSNFTLELDFEPFNASFPRPSLSKSIGNGVQFLNRHLSSKLFHDKESMYPLLNFLKEHHYNGTSMMLNDRIQTLGALQASLRRADEYVLSLPLDTPYSDFGHRFQELGLEKGWGDNAKRVHENLHLLLDLLEAPDPCTLENFLGTIPMVFNVVILSPHGYFAQANVLGYPDTGGQVVYILDQVRAMESEMLLRIKQQGLDITPRILIVTRLLPDAVGTTCGQRLEKVLGTEHTHILRVPFRTEHGILRKWISRFEVWPYLETYAEDVANEVAGELQATPDLIIGNYSDGNLVASLMAHKLGVTQCTIAHALEKTKYPNSDLYWKKFEKQYHFSCQFTADLIAMNHADFIITSTFQEIAGSKDTVGQYESHTGFTLPGLYRVVHGIDVFDPKFNIVSPGADMSIYFPYTEAEKRLTALHPEIEELLYSSAESTEYKFGLKDKTKPIIFSMARLDRVKNMTGLVELYAKNDRLKELVNLVVVCGDHAKASKDLEEQAELKKMYSLIEEYKLDGHIRWISAQMNRVRNGELYRYIADSKGVFVQPAFYEAFGLTVVESMTCGLPTFATCHGGPAEIIVHGVSGYHIDPYHGDKAAELLVDFFEKSKKDQTHWDAISNGGLKRIYEKYTWKIYSERLLTLAGVYGFWKYVSNLDRRETKRYLEMFYALKYRNLAKSVPLAVDGEAAVNGKICTLGC.

Positions 276–753 (MVFNVVILSP…GLKRIYEKYT (478 aa)) are GT-B glycosyltransferase.

This sequence belongs to the glycosyltransferase 1 family. Plant sucrose synthase subfamily.

The enzyme catalyses an NDP-alpha-D-glucose + D-fructose = a ribonucleoside 5'-diphosphate + sucrose + H(+). In terms of biological role, sucrose-cleaving enzyme that provides UDP-glucose and fructose for various metabolic pathways. The chain is Sucrose synthase 2 from Tulipa gesneriana (Garden tulip).